Consider the following 216-residue polypeptide: MQWTLVVPLKALARAKSRLADTAGDGLRPGLALAFAQDTVAAALASAAVRDVAVVTGDPVAGRELAALGARIVADEPAGGLNAALAHAAAVVRSGRPDSGVAALNADLPALRPAELARVLEAAVEFPRAFLPDAAAIGTTLLAAAPGRELLPAFGTDSRARHRASGAVELGLGGVNSVRQDVDTGADLRAALALGVGPRTAAAAARLLIPGPQGDR.

Residues Thr-139, Gly-155, and Ser-158 each contribute to the phosphoenolpyruvate site.

The protein belongs to the CofC family.

It catalyses the reaction phosphoenolpyruvate + GTP + H(+) = enolpyruvoyl-2-diphospho-5'-guanosine + diphosphate. Its pathway is cofactor biosynthesis; coenzyme F420 biosynthesis. Its function is as follows. Guanylyltransferase that catalyzes the activation of phosphoenolpyruvate (PEP) as enolpyruvoyl-2-diphospho-5'-guanosine, via the condensation of PEP with GTP. It is involved in the biosynthesis of coenzyme F420, a hydride carrier cofactor. The chain is Phosphoenolpyruvate guanylyltransferase from Streptomyces avermitilis (strain ATCC 31267 / DSM 46492 / JCM 5070 / NBRC 14893 / NCIMB 12804 / NRRL 8165 / MA-4680).